Reading from the N-terminus, the 339-residue chain is MKCVLGVETSCDETAVALYDGERGLLAHRVYSQIAIHAEYGGVVPELASRDHIRKILPLIKAALDDAALSKENIDGIAYTKGPGLIGALMVGASVAKSLAYAWRVPVVGVHHMEAHLMALQLEESRPAYPFIALLVSGGHTMLVHVEQPGRYKILGESVDDAAGEAFDKTAKLLGLPYPGGPALARLAEQGEPKRFIFPRPMVNQPHLNFSFSGLKTHAVNCFKQYGGEEQTRADIACAFENAVVDTLIIKCLRALEKTGINTLVLVGGVAANKKLRERLGQVAVKRAAQIYYPRQEFCTDNGAMVAYTGWLRLNAGEKEDKIIRVKPRWSMAELNIIN.

Residues His-112 and His-116 each contribute to the Fe cation site. Substrate contacts are provided by residues 135–139 (LVSGG), Asp-168, Gly-181, and Asn-273. Residue Asp-301 participates in Fe cation binding.

This sequence belongs to the KAE1 / TsaD family. Fe(2+) serves as cofactor.

It is found in the cytoplasm. The catalysed reaction is L-threonylcarbamoyladenylate + adenosine(37) in tRNA = N(6)-L-threonylcarbamoyladenosine(37) in tRNA + AMP + H(+). Its function is as follows. Required for the formation of a threonylcarbamoyl group on adenosine at position 37 (t(6)A37) in tRNAs that read codons beginning with adenine. Is involved in the transfer of the threonylcarbamoyl moiety of threonylcarbamoyl-AMP (TC-AMP) to the N6 group of A37, together with TsaE and TsaB. TsaD likely plays a direct catalytic role in this reaction. The polypeptide is tRNA N6-adenosine threonylcarbamoyltransferase (Coxiella burnetii (strain RSA 493 / Nine Mile phase I)).